Consider the following 1683-residue polypeptide: MSNVSTASGTHFAPPQADRSVTEEVDRVNSRPDELENQEVLRQLPENGNLTSSLQREKRRTPNGKEAERKHALPKSFVDRNLSDVSPNHSLDHIMHSNEHDPRRGSDEENMHRLYNNLHSSNNNVHSKRNSKREEERAPQRRSSSVAYTQQQFNGWKKEFGHAFKKISAIGRLKSSVNSPTPAGSGHRHNQHQHQQVNEEDLYTQRLASDLLDSLLAGCPASLFASTQFLRDEHGKRRAPLLLAKLDVRVSPLKNDNNILDITNSNHNHRGNNNNNTGENSDRRPSIPRSSSIISISSNVAEFMYSRNENSLFRIHLEYGIDEDRLKWSIIRSYKDIKSLHHKLKIVAFQQLTISKLYSDNNRYHSLQLPHFPHYKEMVKERNVMEKKAENKPSSAASAPHTSENNNNDNGSNITSLETLSSSEISEFNIDNVKMKHLQDLIDEPDDFSQPIHLRLERYLRLLNIALCLRPHANRLFEFYELSPLGNLLSRESGFQGKQGYLVIRSTAKAQGWRVSHFGKHAFKDMIDRHTTKWFLVRNSYLTYVSDLSSTTPLDVFLIDWKFKVRFSGNKNNILDNENEINWIIHDPNLEINDELEEFGIENDANNILDKNGKSKTHQKKSNISSKLLLLTLENSERKLKIICKSESSLKQWMSSIIKMSTSTPWSKPNRFGSFAPVRTNSFCKFLVDGRDYFWSLSEALLMAKDVIYIHDWWLSPELYLRRPVKGNQGFRIDRMLKSCAEKGIKIFIVIYRNVGNIVGTDSLWTKHSMLNLHPNIHIIRSPNQWLQNTYFWAHHEKFVVIDETFAFIGGTDLCYGRYDTFEHVLRDDAESLLDQNFPGKDYSNARIADFHDLDKPFESMYDRKVIPRMPWHDVQMMTLGEPARDLARHFVQRWNYLLRAKRPSRLTPLLTPPSDLTAEELKSLPMFEILREKSTCETQILRSAGNWSLGLKETECSIQNAYLKLIEQSEHFIYIENQFFITSTVWNGTCVLNKIGDALVDRIVKANQEKKPWKAFILIPLMPGFDSPVDTAEASSLRLIMQFQYQSISRGEHSTFSKLKKLNIDPAQYIQFFSLRKWSTFAPNERLITEQLYVHAKILIADDRRCIIGSANINERSQLGNRDSEVAILIRDTDLIKTKMNGDDYYAGKFPWELRQRLMREHLGCDVDLVEFVEKKFERFEKFAAKNYEKLHTLSKEGDSGNNWSDREMIDSAMIELGYREIFGCKFSPQWKSGHGNSVDDGSTQCGINEKEVGREDENVYEKFFNSVDYGKSSRKRTPLPKHNFASLGLTFNHRAGIENVGIRDHKVLSTDPRLRKNDEHKKEVDGYGPDCWKKESNKKFKADATEQLKEWALNSLASKVLDDKEMIKSEIPEGFSNYLPNEKDLEMYLTDKTVTNRNKWSMLKRICYLQYLSHKLDERKTQRLKKIKDMRRHLSSSTESTRNGSNSLPLNEKSNEGESTNVDQDIEGDEYHRLHEDILKNQELDDGSLDDLLSQIIPKITNFNSGEIDDAKKEELLKLNFIDPYSFEDPLISSFSEGLWFTIALRNTLLYKLVFHCQPDNAVQNWKEYGEFTELEQEFQINQEKLIDLEAENINSTTTNVVDKDREKEKMRKAAELRMKLSGSLLYGFNQKVFDKHTAQRILERIHGHLVIFPTEWLAKEVESRNWIFNSDRLSPMEIYN.

Disordered regions lie at residues 1 to 150 (MSNV…AYTQ), 173 to 198 (LKSSVNSPTPAGSGHRHNQHQHQQVN), 259 to 289 (ILDITNSNHNHRGNNNNNTGENSDRRPSIPR), and 384 to 416 (VMEKKAENKPSSAASAPHTSENNNNDNGSNITS). Serine 2 carries the post-translational modification N-acetylserine. Phosphoserine occurs at positions 8 and 30. Composition is skewed to basic and acidic residues over residues 20–34 (SVTEEVDRVNSRPDE), 63–82 (NGKEAERKHALPKSFVDRNL), and 90–112 (SLDHIMHSNEHDPRRGSDEENMH). The span at 116–125 (NNLHSSNNNV) shows a compositional bias: low complexity. The segment covering 141–150 (RRSSSVAYTQ) has biased composition (polar residues). Serine 145 is modified (phosphoserine). A compositionally biased stretch (low complexity) spans 263–279 (TNSNHNHRGNNNNNTGE). The region spanning 291-487 (SSIISISSNV…EFYELSPLGN (197 aa)) is the PX domain. A compositionally biased stretch (polar residues) spans 392–404 (KPSSAASAPHTSE). Positions 405 to 416 (NNNNDNGSNITS) are enriched in low complexity. Residues 496-664 (QGKQGYLVIR…SSIIKMSTST (169 aa)) form the PH domain. PLD phosphodiesterase domains follow at residues 791 to 818 (YFWAHHEKFVVIDETFAFIGGTDLCYGR) and 1091 to 1118 (EQLYVHAKILIADDRRCIIGSANINERS). Residues histidine 796, lysine 798, aspartate 803, histidine 1096, lysine 1098, and aspartate 1103 contribute to the active site. Positions 1430–1465 (KDMRRHLSSSTESTRNGSNSLPLNEKSNEGESTNVD) are disordered. Residues 1437 to 1451 (SSSTESTRNGSNSLP) show a composition bias toward polar residues. Serine 1461 is modified (phosphoserine). Threonine 1462 is modified (phosphothreonine).

This sequence belongs to the phospholipase D family. As to quaternary structure, interacts with SRF1.

The catalysed reaction is a 1,2-diacyl-sn-glycero-3-phosphocholine + H2O = a 1,2-diacyl-sn-glycero-3-phosphate + choline + H(+). Activity is dependent of phosphatidylinositol 4,5-bisphosphate and the regulator SRF1. Inhibited by magnesium. Required for meiosis and spore formation. Seems to be involved in the coordinate induction of late meiotic events. PLD activity is induced under sporulation conditions and seems to be necessary to complete the meiotic cycle, but not for vegetative cell growth. The chain is Phospholipase D1 (SPO14) from Saccharomyces cerevisiae (strain ATCC 204508 / S288c) (Baker's yeast).